A 285-amino-acid polypeptide reads, in one-letter code: Nucleotide-binding protein FMG_1084 (285 aa).

8 to 15 (GMSGAGKS) contributes to the ATP binding site. GTP is bound at residue 59–62 (DIRG).

The protein belongs to the RapZ-like family.

Functionally, displays ATPase and GTPase activities. The polypeptide is Nucleotide-binding protein FMG_1084 (Finegoldia magna (strain ATCC 29328 / DSM 20472 / WAL 2508) (Peptostreptococcus magnus)).